We begin with the raw amino-acid sequence, 215 residues long: Nascent polypeptide-associated complex subunit alpha (215 aa).

A disordered region spans residues 1–81; the sequence is MPGEATDTVP…SEKKARKAMS (81 aa). Over residues 9 to 28 the composition is skewed to polar residues; sequence VPATEQELPQPQAETGSGTE. Acidic residues predominate over residues 29 to 42; it reads SDSDESVPELEEQD. Ser43 carries the post-translational modification Phosphoserine; by ILK1. Residues 44–57 are compositionally biased toward low complexity; it reads TQATTQQAQLAAAA. The interval 69–80 is required for DNA-binding; the sequence is QSRSEKKARKAM. An NAC-A/B domain is found at 70–135; it reads SRSEKKARKA…AKIEDLSQQA (66 aa). Residues 93–108 form an RNA/DNA-binding region; that stretch reads RVTIRKSKNILFVITK. Ser132 carries the phosphoserine modification. Lys142 is subject to N6-acetyllysine; alternate. A Glycyl lysine isopeptide (Lys-Gly) (interchain with G-Cter in SUMO2); alternate cross-link involves residue Lys142. A Phosphothreonine; by GSK3-beta modification is found at Thr159. Thr161 carries the phosphothreonine modification. A phosphoserine mark is found at Ser166, Ser186, Ser191, and Ser203. The 38-residue stretch at 176 to 213 folds into the UBA domain; that stretch reads VEVKDIELVMSQANVSRAKAVRALKNNSNDIVNAIMEL.

Belongs to the NAC-alpha family. As to quaternary structure, part of the nascent polypeptide-associated complex (NAC), which is a heterodimer of NACA and BTF3 (via NAC-A/B domains). NAC associates with ribosomes through the BTF3/NACB subunit and contacts the ribosomal protein L23, which is positioned near the exiting site. Both subunits can contact nascent polypeptide chains. NACA may also form homodimers, and only this form binds DNA. Interacts with TBP and JUN. In terms of processing, phosphorylation of Ser-43 by ILK during cell adhesion may promote nuclear localization. Phosphorylation of Thr-159 by GSK3B may promote proteasome mediated degradation.

It localises to the cytoplasm. The protein localises to the nucleus. Its function is as follows. Prevents inappropriate targeting of non-secretory polypeptides to the endoplasmic reticulum (ER). Binds to nascent polypeptide chains as they emerge from the ribosome and blocks their interaction with the signal recognition particle (SRP), which normally targets nascent secretory peptides to the ER. Also reduces the inherent affinity of ribosomes for protein translocation sites in the ER membrane (M sites). May act as a specific coactivator for JUN, binding to DNA and stabilizing the interaction of JUN homodimers with target gene promoters. The chain is Nascent polypeptide-associated complex subunit alpha (NACA) from Bos taurus (Bovine).